Consider the following 906-residue polypeptide: Protein translocase subunit SecA (906 aa).

ATP contacts are provided by residues glutamine 87, 105-109, and aspartate 507; that span reads GEGKT. The Zn(2+) site is built by cysteine 890, cysteine 892, cysteine 901, and histidine 902.

Belongs to the SecA family. Monomer and homodimer. Part of the essential Sec protein translocation apparatus which comprises SecA, SecYEG and auxiliary proteins SecDF-YajC and YidC. Zn(2+) is required as a cofactor.

It is found in the cell inner membrane. The protein localises to the cytoplasm. The enzyme catalyses ATP + H2O + cellular proteinSide 1 = ADP + phosphate + cellular proteinSide 2.. Its function is as follows. Part of the Sec protein translocase complex. Interacts with the SecYEG preprotein conducting channel. Has a central role in coupling the hydrolysis of ATP to the transfer of proteins into and across the cell membrane, serving both as a receptor for the preprotein-SecB complex and as an ATP-driven molecular motor driving the stepwise translocation of polypeptide chains across the membrane. This is Protein translocase subunit SecA from Laribacter hongkongensis (strain HLHK9).